The primary structure comprises 65 residues: Temporin-SN1 (65 aa).

Residues 1 to 22 (MFTTKKSLLLLFFLGTINLSLC) form the signal peptide. Residues 23-44 (QEERNAEEERRDGDDEGGVEVQ) constitute a propeptide, removed in mature form. Position 65 is a lysine amide (K65).

The protein belongs to the frog skin active peptide (FSAP) family. Temporin subfamily. Expressed by the skin glands.

The protein localises to the secreted. Functionally, antimicrobial peptide. Active against a variety of Gram-positive bacterial strains. Not active against Gram-negative bacteria and against fungi. Shows hemolytic activity against human erythrocytes. The polypeptide is Temporin-SN1 (Sylvirana spinulosa (Fine-spined frog)).